We begin with the raw amino-acid sequence, 391 residues long: Formate-dependent phosphoribosylglycinamide formyltransferase (391 aa).

Residues 18–19 (EL) and Glu78 contribute to the N(1)-(5-phospho-beta-D-ribosyl)glycinamide site. ATP contacts are provided by residues Arg110, Lys151, 156 to 161 (SSGKGQ), 191 to 194 (EEFI), and Glu199. Positions 115-305 (DLASKDLKIK…EFELHLRAFL (191 aa)) constitute an ATP-grasp domain. Residues Glu264 and Glu276 each coordinate Mg(2+). N(1)-(5-phospho-beta-D-ribosyl)glycinamide-binding positions include Asp283, Lys353, and 360–361 (RR).

This sequence belongs to the PurK/PurT family. Homodimer.

It catalyses the reaction N(1)-(5-phospho-beta-D-ribosyl)glycinamide + formate + ATP = N(2)-formyl-N(1)-(5-phospho-beta-D-ribosyl)glycinamide + ADP + phosphate + H(+). It functions in the pathway purine metabolism; IMP biosynthesis via de novo pathway; N(2)-formyl-N(1)-(5-phospho-D-ribosyl)glycinamide from N(1)-(5-phospho-D-ribosyl)glycinamide (formate route): step 1/1. Its function is as follows. Involved in the de novo purine biosynthesis. Catalyzes the transfer of formate to 5-phospho-ribosyl-glycinamide (GAR), producing 5-phospho-ribosyl-N-formylglycinamide (FGAR). Formate is provided by PurU via hydrolysis of 10-formyl-tetrahydrofolate. The protein is Formate-dependent phosphoribosylglycinamide formyltransferase of Prochlorococcus marinus (strain AS9601).